We begin with the raw amino-acid sequence, 668 residues long: Protein IQ-DOMAIN 14 (668 aa).

Positions 1 to 11 are calmodulin-binding; the sequence is MVKKGSWFSAI. Disordered stretches follow at residues 16–54 and 66–305; these read TPHSKEKLANEPERKSGKEKKKKGFGKLRHGETNSFLPI and GEAE…PRAV. Positions 18–31 are enriched in basic and acidic residues; sequence HSKEKLANEPERKS. Residues 32 to 43 show a composition bias toward basic residues; sequence GKEKKKKGFGKL. Residues 78-96 show a composition bias toward pro residues; sequence PPTPDRPNPYSASPPPRPA. Composition is skewed to low complexity over residues 97-120 and 166-175; these read SPRVASPRPTSPRVASPRVPSPRA and PSSASANAPP. Over residues 269-279 the composition is skewed to pro residues; that stretch reads PTTPKPPSPRS. 2 consecutive IQ domains span residues 321–350 and 343–372; these read QHASATKIQGAFRGYMARKSFRALKGLVRL and ALKGLVRLQGVVRGYSVKRQTINAMKYMQQ. Disordered regions lie at residues 399–431 and 476–561; these read AKWAASEAGNDNWDDSVLTKEERDSRSQRKTDA and SPAP…SLTS. The segment covering 415 to 431 has biased composition (basic and acidic residues); the sequence is VLTKEERDSRSQRKTDA. The span at 516–529 shows a compositional bias: polar residues; the sequence is DTSTPRSSRSTFHT.

Belongs to the IQD family. Binds to multiple calmodulin (CaM) in the presence of Ca(2+) and CaM-like proteins. Expressed in hypocotyls, cotyledons, leaves and petioles.

It is found in the cell membrane. It localises to the cytoplasm. Its subcellular location is the cytoskeleton. May be involved in cooperative interactions with calmodulins or calmodulin-like proteins. Recruits calmodulin proteins to microtubules, thus being a potential scaffold in cellular signaling and trafficking. Regulates cell and organ shapes (prevents twisting) in aerial parts probably by regulating transverse microtubules (MT) arrays alignment. Regulates the formation of oval xylem secondary cell-wall deposition pits through microtubule-dependent lateral inhibition of Rho GTPase domains, thus confining the area of active ROP domains within the lattice of the cortical microtubules. May associate with nucleic acids and regulate gene expression at the transcriptional or post-transcriptional level. This chain is Protein IQ-DOMAIN 14, found in Arabidopsis thaliana (Mouse-ear cress).